Here is a 432-residue protein sequence, read N- to C-terminus: Glutamate-1-semialdehyde 2,1-aminomutase (432 aa).

K265 bears the N6-(pyridoxal phosphate)lysine mark.

The protein belongs to the class-III pyridoxal-phosphate-dependent aminotransferase family. HemL subfamily. In terms of assembly, homodimer. Pyridoxal 5'-phosphate serves as cofactor.

It is found in the cytoplasm. The enzyme catalyses (S)-4-amino-5-oxopentanoate = 5-aminolevulinate. The protein operates within porphyrin-containing compound metabolism; protoporphyrin-IX biosynthesis; 5-aminolevulinate from L-glutamyl-tRNA(Glu): step 2/2. This is Glutamate-1-semialdehyde 2,1-aminomutase from Vibrio cholerae serotype O1 (strain ATCC 39541 / Classical Ogawa 395 / O395).